A 353-amino-acid polypeptide reads, in one-letter code: Stearoyl-CoA desaturase 4 (353 aa).

Residues 1-42 (MTAHLPQEISSRCSTTNIMEPHSRRQQDGEEKMPLQAEDIRP) are disordered. Over 1 to 66 (MTAHLPQEIS…EGPPPKLEYV (66 aa)) the chain is Cytoplasmic. Residues 8–18 (EISSRCSTTNI) are compositionally biased toward polar residues. The segment covering 21–42 (PHSRRQQDGEEKMPLQAEDIRP) has biased composition (basic and acidic residues). The chain crosses the membrane as a helical span at residues 67-87 (WRNIIFMALLHVGALYGITLV). N69 contributes to the substrate binding site. Over 88–91 (PSCK) the chain is Lumenal. Residues 92 to 112 (VYTWLLGVFYNVVAGLGITAG) traverse the membrane as a helical segment. Residues 113–211 (AHRLWSHRTY…EKLVMFQRRY (99 aa)) lie on the Cytoplasmic side of the membrane. 2 residues coordinate Fe cation: H114 and H119. Positions 114–119 (HRLWSH) match the Histidine box-1 motif. Substrate contacts are provided by N142, R149, and D150. H151, H154, and H155 together coordinate Fe cation. The Histidine box-2 motif lies at 151-155 (HRAHH). Substrate-binding residues include R182 and K183. A helical membrane pass occupies residues 212-231 (YKLAVTLMFIILPTLVPWYL). The Lumenal portion of the chain corresponds to 232–235 (WGET). The chain crosses the membrane as a helical span at residues 236 to 257 (FQHSLCVSNFLRYAVLLNFTWL). Substrate is bound at residue W256. The Cytoplasmic portion of the chain corresponds to 258-353 (VNSAAHLYGY…RTGDGSHKSS (96 aa)). Positions 263, 292, 295, and 296 each coordinate Fe cation. The short motif at 292-296 (HNYHH) is the Histidine box-3 element.

The protein belongs to the fatty acid desaturase type 1 family. It depends on Fe(2+) as a cofactor. Detected in heart, but not in brain, liver, skin or adipose tissue.

The protein localises to the endoplasmic reticulum membrane. It localises to the microsome membrane. The catalysed reaction is octadecanoyl-CoA + 2 Fe(II)-[cytochrome b5] + O2 + 2 H(+) = (9Z)-octadecenoyl-CoA + 2 Fe(III)-[cytochrome b5] + 2 H2O. The enzyme catalyses hexadecanoyl-CoA + 2 Fe(II)-[cytochrome b5] + O2 + 2 H(+) = (9Z)-hexadecenoyl-CoA + 2 Fe(III)-[cytochrome b5] + 2 H2O. Stearoyl-CoA desaturase that utilizes O(2) and electrons from reduced cytochrome b5 to introduce the first double bond into saturated fatty acyl-CoA substrates. Catalyzes the insertion of a cis double bond at the delta-9 position into fatty acyl-CoA substrates including palmitoyl-CoA and stearoyl-CoA. Required for the biosynthesis of membrane phospholipids, cholesterol esters and triglycerides. In Mus musculus (Mouse), this protein is Stearoyl-CoA desaturase 4.